The primary structure comprises 199 residues: Protein MM_0484 (199 aa).

The AMMECR1 domain occupies Thr5–Glu196.

The protein is Protein MM_0484 of Methanosarcina mazei (strain ATCC BAA-159 / DSM 3647 / Goe1 / Go1 / JCM 11833 / OCM 88) (Methanosarcina frisia).